A 258-amino-acid chain; its full sequence is Small ribosomal subunit protein uS2 (258 aa).

Residues 222–258 form a disordered region; sequence GKALRDQDEAEQVEPVSQEEKDEVVAEAMSEADFEEQ.

The protein belongs to the universal ribosomal protein uS2 family.

In Campylobacter fetus subsp. fetus (strain 82-40), this protein is Small ribosomal subunit protein uS2.